The chain runs to 444 residues: Transposase for insertion sequence element IS1557 (444 aa).

Residues proline 273 to arginine 292 are disordered.

Belongs to the transposase 12 family.

The sequence is that of Transposase for insertion sequence element IS1557 from Mycobacterium tuberculosis (strain CDC 1551 / Oshkosh).